Reading from the N-terminus, the 123-residue chain is Alpha-lactalbumin A (123 aa).

A C-type lysozyme domain is found at 1–123; it reads KQFTKCELSQ…KLEQWLCEEL (123 aa). Disulfide bonds link Cys-6-Cys-120, Cys-28-Cys-111, Cys-61-Cys-77, and Cys-73-Cys-91. The Ca(2+) site is built by Lys-79, Asp-82, Asp-84, Asp-87, and Asp-88.

This sequence belongs to the glycosyl hydrolase 22 family. In terms of assembly, lactose synthase (LS) is a heterodimer of a catalytic component, beta1,4-galactosyltransferase (beta4Gal-T1) and a regulatory component, alpha-lactalbumin (LA). In terms of tissue distribution, mammary gland specific. Secreted in milk.

It localises to the secreted. In terms of biological role, regulatory subunit of lactose synthase, changes the substrate specificity of galactosyltransferase in the mammary gland making glucose a good acceptor substrate for this enzyme. This enables LS to synthesize lactose, the major carbohydrate component of milk. In other tissues, galactosyltransferase transfers galactose onto the N-acetylglucosamine of the oligosaccharide chains in glycoproteins. This Equus caballus (Horse) protein is Alpha-lactalbumin A.